Here is a 350-residue protein sequence, read N- to C-terminus: Heme A synthase (350 aa).

The next 8 membrane-spanning stretches (helical) occupy residues 14-34, 95-115, 125-145, 162-182, 202-222, 260-280, 296-316, and 317-337; these read VAIWLFLCSVMVILMVGIGGF, YVHRLVARLTGLVFVLPFIYF, VVIKLFVALLFGALQAFAGWY, LALHLLLALIIFALFSYQFFD, VGIILVLIMIQIIFGAFVAGL, VQFIHRALALLILTLVVILTV, IIQIILGVITLLLHIPIAIAI, and AHQVFSFILFGSSLYFLCYLR. Residue histidine 264 participates in heme binding. Position 318 (histidine 318) interacts with heme.

This sequence belongs to the COX15/CtaA family. Type 2 subfamily. As to quaternary structure, interacts with CtaB. It depends on heme b as a cofactor.

Its subcellular location is the cell membrane. The enzyme catalyses Fe(II)-heme o + 2 A + H2O = Fe(II)-heme a + 2 AH2. It functions in the pathway porphyrin-containing compound metabolism; heme A biosynthesis; heme A from heme O: step 1/1. Functionally, catalyzes the conversion of heme O to heme A by two successive hydroxylations of the methyl group at C8. The first hydroxylation forms heme I, the second hydroxylation results in an unstable dihydroxymethyl group, which spontaneously dehydrates, resulting in the formyl group of heme A. The polypeptide is Heme A synthase (Wolbachia pipientis wMel).